Here is a 404-residue protein sequence, read N- to C-terminus: Glucose-1-phosphate adenylyltransferase (404 aa).

Alpha-D-glucose 1-phosphate-binding positions include Tyr99, Gly164, 179–180 (EK), and Ser197.

The protein belongs to the bacterial/plant glucose-1-phosphate adenylyltransferase family.

The enzyme catalyses alpha-D-glucose 1-phosphate + ATP + H(+) = ADP-alpha-D-glucose + diphosphate. It participates in capsule biogenesis; capsule polysaccharide biosynthesis. It functions in the pathway glycan biosynthesis; glycogen biosynthesis. Its function is as follows. Involved in the biosynthesis of ADP-glucose, a building block, required in the biosynthesis of maltose-1-phosphate (M1P) and in the elongation reactions to produce linear alpha-1,4-glucans. Catalyzes the reaction between ATP and alpha-D-glucose 1-phosphate (G1P) to produce pyrophosphate and ADP-Glc. The polypeptide is Glucose-1-phosphate adenylyltransferase (Mycolicibacterium paratuberculosis (strain ATCC BAA-968 / K-10) (Mycobacterium paratuberculosis)).